A 191-amino-acid polypeptide reads, in one-letter code: Fe/S biogenesis protein NfuA (191 aa).

Cys149 and Cys152 together coordinate [4Fe-4S] cluster.

Belongs to the NfuA family. As to quaternary structure, homodimer. It depends on [4Fe-4S] cluster as a cofactor.

Involved in iron-sulfur cluster biogenesis. Binds a 4Fe-4S cluster, can transfer this cluster to apoproteins, and thereby intervenes in the maturation of Fe/S proteins. Could also act as a scaffold/chaperone for damaged Fe/S proteins. This is Fe/S biogenesis protein NfuA from Serratia proteamaculans (strain 568).